Reading from the N-terminus, the 179-residue chain is Large ribosomal subunit protein uL5 (179 aa).

It belongs to the universal ribosomal protein uL5 family. Part of the 50S ribosomal subunit; part of the 5S rRNA/L5/L18/L25 subcomplex. Contacts the 5S rRNA and the P site tRNA. Forms a bridge to the 30S subunit in the 70S ribosome.

In terms of biological role, this is one of the proteins that bind and probably mediate the attachment of the 5S RNA into the large ribosomal subunit, where it forms part of the central protuberance. In the 70S ribosome it contacts protein S13 of the 30S subunit (bridge B1b), connecting the 2 subunits; this bridge is implicated in subunit movement. Contacts the P site tRNA; the 5S rRNA and some of its associated proteins might help stabilize positioning of ribosome-bound tRNAs. The polypeptide is Large ribosomal subunit protein uL5 (Prochlorococcus marinus (strain SARG / CCMP1375 / SS120)).